The following is a 175-amino-acid chain: Protein TWIN SISTER of FT (175 aa).

Belongs to the phosphatidylethanolamine-binding protein family.

It is found in the cytoplasm. May form complexes with phosphorylated ligands by interfering with kinases and their effectors. This Arabidopsis thaliana (Mouse-ear cress) protein is Protein TWIN SISTER of FT (TSF).